The following is a 1241-amino-acid chain: Nephrin (1241 aa).

Positions 1–22 (MALGTTLRASLLLLGLLTEGLA) are cleaved as a signal peptide. Residues 23–1055 (QLAIPASVPR…EDQLPTEPPS (1033 aa)) are Extracellular-facing. Ig-like C2-type domains lie at 27 to 130 (PASV…VILS), 143 to 234 (EAGT…SFTV), 242 to 333 (PPVI…HGIT), 340 to 434 (PSAI…KSLI), 440 to 540 (PAQK…TQLA), and 544 to 635 (PPTN…ETVS). A glycan (N-linked (GlcNAc...) asparagine) is linked at N40. 3 disulfides stabilise this stretch: C53–C111, C160–C217, and C265–C317. N-linked (GlcNAc...) asparagine glycosylation is found at N356 and N401. C361 and C417 are disulfide-bonded. A Phosphoserine modification is found at S432. C465 and C528 are joined by a disulfide. N-linked (GlcNAc...) asparagine glycans are attached at residues N547, N553, N564, N577, N680, and N708. A disulfide bridge links C567 with C623. Ig-like C2-type domains lie at 740-832 (PTIR…LLRL) and 838-939 (PQVE…VSIS). Intrachain disulfides connect C761–C816 and C863–C920. N-linked (GlcNAc...) asparagine glycosylation occurs at N908. The 96-residue stretch at 943 to 1038 (PPSGLKVVSL…TQLPITTPGL (96 aa)) folds into the Fibronectin type-III domain. The tract at residues 1025 to 1057 (ADKGTQLPITTPGLHQPSGEPEDQLPTEPPSGP) is disordered. A helical transmembrane segment spans residues 1056–1076 (GPSGLPLLPVLFALGGLLLLS). Over 1077-1241 (NASCVGGVLW…LPFELRGHLV (165 aa)) the chain is Cytoplasmic. Phosphoserine is present on S1098. Residues 1099–1114 (EKTEAGSEEDRVRNEY) are compositionally biased toward basic and acidic residues. Positions 1099-1137 (EKTEAGSEEDRVRNEYEESQWTGERDTQSSTVSTTEAEP) are disordered. Position 1101 is a phosphothreonine (T1101). Phosphoserine is present on S1105. Residues 1160–1241 (RGFTGEDEDM…LPFELRGHLV (82 aa)) are binds to NPHS2. Residue Y1193 is modified to Phosphotyrosine; by FYN.

It belongs to the immunoglobulin superfamily. As to quaternary structure, interacts with CD2AP (via C-terminal domain). Interacts with MAGI1 (via PDZ 2 and 3 domains) forming a tripartite complex with IGSF5/JAM4. Interacts with DDN; the interaction is direct. Self-associates (via the Ig-like domains). Also interacts (via the Ig-like domains) with KIRREL1/NEPH1 and KIRREL2; the interaction with KIRREL1 is dependent on KIRREL1 glycosylation. Interacts with KIRREL3. Forms a complex with ACTN4, CASK, IQGAP1, MAGI2, SPTAN1 and SPTBN1. Interacts with NPHS2. Interacts with phosphatidylinositol 3-kinase regulatory subunit PIK3R1; the interaction is reduced by high glucose levels. Phosphorylated at Tyr-1193 by FYN, leading to the recruitment and activation of phospholipase C-gamma-1/PLCG1. Tyrosine phosphorylation is reduced by high glucose levels. Dephosphorylated by tensin TNS2 which leads to reduced binding of NPHN1 to PIK3R1. Specifically expressed in podocytes of kidney glomeruli.

It localises to the cell membrane. Its function is as follows. Seems to play a role in the development or function of the kidney glomerular filtration barrier. Regulates glomerular vascular permeability. May anchor the podocyte slit diaphragm to the actin cytoskeleton. Plays a role in skeletal muscle formation through regulation of myoblast fusion. The polypeptide is Nephrin (NPHS1) (Homo sapiens (Human)).